Here is a 118-residue protein sequence, read N- to C-terminus: Basic phospholipase A2 PA-13 (118 aa).

7 cysteine pairs are disulfide-bonded: C11–C71, C27–C117, C29–C45, C44–C98, C51–C91, C60–C84, and C78–C89. The Ca(2+) site is built by Y28, G30, and G32. Residue H48 is part of the active site. Ca(2+) is bound at residue D49. The active site involves D92.

The protein belongs to the phospholipase A2 family. Group I subfamily. D49 sub-subfamily. Ca(2+) serves as cofactor. Expressed by the venom gland.

The protein localises to the secreted. It catalyses the reaction a 1,2-diacyl-sn-glycero-3-phosphocholine + H2O = a 1-acyl-sn-glycero-3-phosphocholine + a fatty acid + H(+). Its function is as follows. PLA2 catalyzes the calcium-dependent hydrolysis of the 2-acyl groups in 3-sn-phosphoglycerides. In Pseudechis australis (Mulga snake), this protein is Basic phospholipase A2 PA-13.